Consider the following 417-residue polypeptide: Ankyrin repeat and SAM domain-containing protein 4B (417 aa).

A mediates localization to microvilli region spans residues 1–252 (MSTRYHQAAS…SGDFKEKLQL (252 aa)). 3 ANK repeats span residues 31–60 (DGMT…DPDR), 64–93 (WGNT…NIFA), and 97–126 (DLQT…AQNI). Positions 130-164 (KKVTRLKEQAQKNARRQIKECERLQEKHQNKMAHT) form a coiled coil. Positions 151-195 (ERLQEKHQNKMAHTYSKEESGTLSSSKGTFSRSSPSNASAPGTFG) are disordered. The segment covering 171–190 (GTLSSSKGTFSRSSPSNASA) has biased composition (polar residues). The mediates interaction with MYO7B stretch occupies residues 253–346 (SAEEDGSVHH…EWEEDVVDAT (94 aa)). S283 bears the Phosphoserine mark. Residues 305–330 (RQGASEADEGAADEEGEENGLKDDLP) form a disordered region. A compositionally biased stretch (acidic residues) spans 310–322 (EADEGAADEEGEE). In terms of domain architecture, SAM spans 351-403 (FLLSQHLEEFLPIFKREQIDLEALLLCSDEDLQSIQMQLGPRKKVLNAINRRK). A PDZ-binding; mediates interaction with USH1C motif is present at residues 415–417 (TSL).

In terms of assembly, part of the IMAC/intermicrovillar adhesion complex/intermicrovillar tip-link complex composed of ANKS4B, MYO7B, USH1C, CDHR2 and CDHR5. Interacts with USH1C; the interaction is direct and is required for ANKS4B localization to the tip of microvilli. Interacts with MYO7B; the interaction is direct. May interact with HSPA5. Expressed in kidney and small intestine.

The protein localises to the cell projection. Its subcellular location is the microvillus. Its function is as follows. As part of the intermicrovillar adhesion complex/IMAC plays a role in epithelial brush border differentiation, controlling microvilli organization and length. Plays a role in assembly of the complex. May play a role in cellular response to endoplasmic reticulum stress. This Homo sapiens (Human) protein is Ankyrin repeat and SAM domain-containing protein 4B.